Here is an 80-residue protein sequence, read N- to C-terminus: Pigment-dispersing hormone peptides (80 aa).

A signal peptide spans 1–20; sequence MANYITIAIIVGIVCGQALS. Residues 21–58 constitute a propeptide that is removed on maturation; sequence VEDVDRNLLELNLPYGRGLDSELQLARLMLAAPRFCHP. At alanine 78 the chain carries Alanine amide.

This sequence belongs to the arthropod PDH family. In terms of tissue distribution, expressed in the brain (at protein level).

The protein localises to the secreted. Neuropeptide PDF is the main transmitter regulating circadian locomotor rhythms. This is Pigment-dispersing hormone peptides from Camponotus floridanus (Florida carpenter ant).